The primary structure comprises 313 residues: Probable 5-dehydro-4-deoxyglucarate dehydratase (313 aa).

Belongs to the DapA family.

The enzyme catalyses 5-dehydro-4-deoxy-D-glucarate + H(+) = 2,5-dioxopentanoate + CO2 + H2O. The protein operates within carbohydrate acid metabolism; D-glucarate degradation; 2,5-dioxopentanoate from D-glucarate: step 2/2. The polypeptide is Probable 5-dehydro-4-deoxyglucarate dehydratase (Bradyrhizobium sp. (strain BTAi1 / ATCC BAA-1182)).